Here is a 184-residue protein sequence, read N- to C-terminus: Large ribosomal subunit protein uL5 (184 aa).

It belongs to the universal ribosomal protein uL5 family. In terms of assembly, part of the 50S ribosomal subunit; part of the 5S rRNA/L5/L18/L25 subcomplex. Contacts the 5S rRNA and the P site tRNA. Forms a bridge to the 30S subunit in the 70S ribosome.

In terms of biological role, this is one of the proteins that bind and probably mediate the attachment of the 5S RNA into the large ribosomal subunit, where it forms part of the central protuberance. In the 70S ribosome it contacts protein S13 of the 30S subunit (bridge B1b), connecting the 2 subunits; this bridge is implicated in subunit movement. Contacts the P site tRNA; the 5S rRNA and some of its associated proteins might help stabilize positioning of ribosome-bound tRNAs. The polypeptide is Large ribosomal subunit protein uL5 (Thermotoga sp. (strain RQ2)).